The primary structure comprises 306 residues: Follistatin-related protein 1 (306 aa).

The first 18 residues, 1-18 (MWKRWLALALVAVAWVRA), serve as a signal peptide directing secretion. A Follistatin-like domain is found at 28-51 (ICANVFCGAGRECAVTEKGEPTCL). Cystine bridges form between C29-C40, C34-C50, C52-C82, C56-C75, and C64-C96. A Kazal-like domain is found at 46–98 (GEPTCLCIEQCKPHKRPVCGSNGKTYLNHCELHRDACLTGSKIQVDYDGHCKE). N142 carries N-linked (GlcNAc...) asparagine glycosylation. An EF-hand 1 domain is found at 142–176 (NYSEILDKYFKNFDNGDSRLDSSEFLKFVEQNETA). Phosphoserine is present on S163. 2 N-linked (GlcNAc...) asparagine glycosylation sites follow: N173 and N178. Residues 191–226 (LRGLCVDALIELSDENADWKLSFQEFLKCLNPSFNP) enclose the EF-hand 2 domain. The region spanning 231–285 (CALEDETYADGAETEVDCNRCVCACGNWVCTAMTCDGKNQKGAQTQTEEEMTRYV) is the VWFC domain.

As to quaternary structure, homodimer. Interacts with SCN10A. Interacts with DIP2A; DIP2A may act as a cell surface receptor for FSTL1. Interacts with BMP4. Interacts with CD14; this interaction promotes TL4-mediated signaling cascade.

The protein localises to the secreted. Functionally, secreted glycoprotein that is involved in various physiological processes, such as angiogenesis, regulation of the immune response, cell proliferation and differentiation. Plays a role in the development of the central nervous system, skeletal system, lungs, and ureter. Promotes endothelial cell survival, migration and differentiation into network structures in an AKT-dependent manner. Also promotes survival of cardiac myocytes. Initiates various signaling cascades by activating different receptors on the cell surface such as DIP2A, TLR4 or BMP receptors. The polypeptide is Follistatin-related protein 1 (FSTL1) (Pongo abelii (Sumatran orangutan)).